Here is a 343-residue protein sequence, read N- to C-terminus: Aspartate carbamoyltransferase catalytic subunit (343 aa).

Carbamoyl phosphate-binding residues include R71 and T72. L-aspartate is bound at residue K99. Residues R121, H149, and Q152 each contribute to the carbamoyl phosphate site. L-aspartate-binding residues include R195 and R249. Carbamoyl phosphate-binding residues include G290 and P291.

It belongs to the aspartate/ornithine carbamoyltransferase superfamily. ATCase family. Heterododecamer (2C3:3R2) of six catalytic PyrB chains organized as two trimers (C3), and six regulatory PyrI chains organized as three dimers (R2).

It carries out the reaction carbamoyl phosphate + L-aspartate = N-carbamoyl-L-aspartate + phosphate + H(+). It functions in the pathway pyrimidine metabolism; UMP biosynthesis via de novo pathway; (S)-dihydroorotate from bicarbonate: step 2/3. Catalyzes the condensation of carbamoyl phosphate and aspartate to form carbamoyl aspartate and inorganic phosphate, the committed step in the de novo pyrimidine nucleotide biosynthesis pathway. This chain is Aspartate carbamoyltransferase catalytic subunit, found in Rhodopirellula baltica (strain DSM 10527 / NCIMB 13988 / SH1).